The following is a 429-amino-acid chain: UDP-N-acetylglucosamine 1-carboxyvinyltransferase (429 aa).

Residue 22-23 (KN) coordinates phosphoenolpyruvate. Residue Arg-102 coordinates UDP-N-acetyl-alpha-D-glucosamine. Cys-126 acts as the Proton donor in catalysis. Cys-126 carries the 2-(S-cysteinyl)pyruvic acid O-phosphothioketal modification. UDP-N-acetyl-alpha-D-glucosamine-binding positions include 131–135 (RPVDL), Asp-316, and Ile-338.

The protein belongs to the EPSP synthase family. MurA subfamily.

Its subcellular location is the cytoplasm. The catalysed reaction is phosphoenolpyruvate + UDP-N-acetyl-alpha-D-glucosamine = UDP-N-acetyl-3-O-(1-carboxyvinyl)-alpha-D-glucosamine + phosphate. Its pathway is cell wall biogenesis; peptidoglycan biosynthesis. Cell wall formation. Adds enolpyruvyl to UDP-N-acetylglucosamine. The protein is UDP-N-acetylglucosamine 1-carboxyvinyltransferase of Rhodopseudomonas palustris (strain TIE-1).